We begin with the raw amino-acid sequence, 177 residues long: Dihydrofolate reductase type 9 (177 aa).

The region spanning 3–167 is the DHFR domain; that stretch reads SLNMIVAVNK…TKLIFQIWIN (165 aa).

Belongs to the dihydrofolate reductase family. As to quaternary structure, homodimer.

The enzyme catalyses (6S)-5,6,7,8-tetrahydrofolate + NADP(+) = 7,8-dihydrofolate + NADPH + H(+). It functions in the pathway cofactor biosynthesis; tetrahydrofolate biosynthesis; 5,6,7,8-tetrahydrofolate from 7,8-dihydrofolate: step 1/1. Its function is as follows. Key enzyme in folate metabolism. Catalyzes an essential reaction for de novo glycine and purine synthesis, and for DNA precursor synthesis. This Escherichia coli protein is Dihydrofolate reductase type 9 (dhfrIX).